Consider the following 735-residue polypeptide: Catalase-peroxidase (735 aa).

The tryptophyl-tyrosyl-methioninium (Trp-Tyr) (with M-249) cross-link spans 95 to 223 (WHSAGTYRTG…LAAVQMGLIY (129 aa)). H96 acts as the Proton acceptor in catalysis. The segment at residues 223-249 (YVNPEGPDGVPDPIKSGIDIRETFARM) is a cross-link (tryptophyl-tyrosyl-methioninium (Tyr-Met) (with W-95)). H264 contributes to the heme b binding site.

This sequence belongs to the peroxidase family. Peroxidase/catalase subfamily. In terms of assembly, homodimer or homotetramer. Heme b serves as cofactor. In terms of processing, formation of the three residue Trp-Tyr-Met cross-link is important for the catalase, but not the peroxidase activity of the enzyme.

It catalyses the reaction H2O2 + AH2 = A + 2 H2O. The enzyme catalyses 2 H2O2 = O2 + 2 H2O. Bifunctional enzyme with both catalase and broad-spectrum peroxidase activity. The protein is Catalase-peroxidase of Aliarcobacter butzleri (strain RM4018) (Arcobacter butzleri).